The chain runs to 524 residues: 2-isopropylmalate synthase (524 aa).

The 263-residue stretch at 12–274 (VIIFDTTLRD…WNNIETTMLT (263 aa)) folds into the Pyruvate carboxyltransferase domain. Residues Asp21, His209, His211, and Asn245 each coordinate Mn(2+). The segment at 398-524 (KLNSLTVIAG…EAVPAVAAAG (127 aa)) is regulatory domain.

This sequence belongs to the alpha-IPM synthase/homocitrate synthase family. LeuA type 1 subfamily. In terms of assembly, homodimer. Requires Mn(2+) as cofactor.

Its subcellular location is the cytoplasm. It catalyses the reaction 3-methyl-2-oxobutanoate + acetyl-CoA + H2O = (2S)-2-isopropylmalate + CoA + H(+). Its pathway is amino-acid biosynthesis; L-leucine biosynthesis; L-leucine from 3-methyl-2-oxobutanoate: step 1/4. Its function is as follows. Catalyzes the condensation of the acetyl group of acetyl-CoA with 3-methyl-2-oxobutanoate (2-ketoisovalerate) to form 3-carboxy-3-hydroxy-4-methylpentanoate (2-isopropylmalate). The polypeptide is 2-isopropylmalate synthase (Rhodopseudomonas palustris (strain HaA2)).